The chain runs to 461 residues: Pyruvate kinase (461 aa).

Residue Arg-46 participates in substrate binding. Asn-48 and Asp-80 together coordinate K(+). 48-51 (NLAH) is an ATP binding site. ATP contacts are provided by Arg-87 and Lys-165. Glu-232 lines the Mg(2+) pocket. The substrate site is built by Gly-255, Asp-256, and Thr-288. Asp-256 lines the Mg(2+) pocket.

It belongs to the pyruvate kinase family. In terms of assembly, homotetramer. A divalent metal cation is required as a cofactor.

It catalyses the reaction pyruvate + ATP = phosphoenolpyruvate + ADP + H(+). Its pathway is carbohydrate degradation; glycolysis; pyruvate from D-glyceraldehyde 3-phosphate: step 5/5. Its activity is regulated as follows. Not activated by classical allosteric effectors. This chain is Pyruvate kinase (pyk), found in Pyrobaculum aerophilum (strain ATCC 51768 / DSM 7523 / JCM 9630 / CIP 104966 / NBRC 100827 / IM2).